Here is a 65-residue protein sequence, read N- to C-terminus: Hainantoxin-X-3 (65 aa).

The signal sequence occupies residues 1–20; sequence MNMKILVLVAVLCLVVSTHA. The propeptide occupies 21–37; sequence ERHSKTDMEDSPMIQER. Intrachain disulfides connect C46–C59 and C55–C64.

It belongs to the neurotoxin 36 family. 02 subfamily. Expressed by the venom gland.

It is found in the secreted. Reversibly blocks N-type calcium channels (Cav2.2/CACNA1B) in rat dorsal root ganglion cells. Elicits no toxic symptoms in either vertebrates or invertebrates during a period of 48 hours post-injection, when it was assayed in vivo by direct injection into mice and cockroaches. The polypeptide is Hainantoxin-X-3 (Cyriopagopus hainanus (Chinese bird spider)).